A 91-amino-acid polypeptide reads, in one-letter code: Putative regulatory protein Moth_0891 (91 aa).

Belongs to the RemA family.

The chain is Putative regulatory protein Moth_0891 from Moorella thermoacetica (strain ATCC 39073 / JCM 9320).